The following is a 637-amino-acid chain: Extracellular metalloproteinase 2 (637 aa).

The first 20 residues, 1 to 20 (MRSFLLASLASVATLKSAQA), serve as a signal peptide directing secretion. Positions 21–244 (HPAHSTRGLS…VHAVVDYSAD (224 aa)) are excised as a propeptide. Residues N302, N328, N337, and N413 are each glycosylated (N-linked (GlcNAc...) asparagine). Position 430 (H430) interacts with Zn(2+). E431 is an active-site residue. H434 contacts Zn(2+).

It belongs to the peptidase M36 family. Zn(2+) serves as cofactor.

Its subcellular location is the secreted. Secreted metalloproteinase that allows assimilation of proteinaceous substrates. This is Extracellular metalloproteinase 2 (MEP2) from Phaeosphaeria nodorum (strain SN15 / ATCC MYA-4574 / FGSC 10173) (Glume blotch fungus).